A 147-amino-acid polypeptide reads, in one-letter code: uncharacterized protein (147 aa).

Residues 1–147 form the N-acetyltransferase domain; that stretch reads MEIRRADKDD…RPESGGSGSE (147 aa).

This sequence belongs to the acetyltransferase family.

This is an uncharacterized protein from Archaeoglobus fulgidus (strain ATCC 49558 / DSM 4304 / JCM 9628 / NBRC 100126 / VC-16).